The sequence spans 441 residues: Xaa-Pro dipeptidase (441 aa).

Residues Asp244, Asp255, His336, Glu381, and Glu420 each coordinate Mn(2+).

The protein belongs to the peptidase M24B family. Bacterial-type prolidase subfamily. The cofactor is Mn(2+).

The enzyme catalyses Xaa-L-Pro dipeptide + H2O = an L-alpha-amino acid + L-proline. Splits dipeptides with a prolyl residue in the C-terminal position. The polypeptide is Xaa-Pro dipeptidase (Xanthomonas campestris pv. campestris (strain 8004)).